A 736-amino-acid chain; its full sequence is Dynamin-1-like protein (736 aa).

Met-1 carries the post-translational modification N-acetylmethionine. Positions 22–302 (IIQLPQIVVV…LMHHIRDCLP (281 aa)) constitute a Dynamin-type G domain. The tract at residues 32–39 (GTQSSGKS) is G1 motif. Residue 32–40 (GTQSSGKSS) coordinates GTP. Residues 58–60 (VTR) are G2 motif. A G3 motif region spans residues 146 to 149 (DLPG). Positions 215 to 218 (TKLD) are G4 motif. Residues 215 to 221 (TKLDLMD) and 246 to 249 (NRSQ) contribute to the GTP site. The segment at 245-248 (VNRS) is G5 motif. Positions 344–489 (YCNTIEGTAK…NEMVHNLVAI (146 aa)) are middle domain. The interval 448 to 685 (NYSTQELLRF…NHVKDTLQSE (238 aa)) is interaction with GSK3B. Residues 502–569 (ADACGLMNNN…IQDSRRETKN (68 aa)) are b domain. The segment at 523-590 (ELPSAVSRDK…VQEPTTGNWR (68 aa)) is disordered. The residue at position 529 (Ser-529) is a Phosphoserine. Glycyl lysine isopeptide (Lys-Gly) (interchain with G-Cter in SUMO) cross-links involve residues Lys-532 and Lys-535. The span at 537-554 (PSALAPASQEPSPAASAE) shows a compositional bias: low complexity. Residue Ser-548 is modified to Phosphoserine. Residues 555 to 568 (ADGKLIQDSRRETK) show a composition bias toward basic and acidic residues. Residues Lys-558 and Lys-568 each participate in a glycyl lysine isopeptide (Lys-Gly) (interchain with G-Cter in SUMO) cross-link. 2 O-linked (GlcNAc) threonine glycosylation sites follow: Thr-585 and Thr-586. Residue Lys-594 forms a Glycyl lysine isopeptide (Lys-Gly) (interchain with G-Cter in SUMO) linkage. Lys-597 is modified (N6-acetyllysine; alternate). Residue Lys-597 forms a Glycyl lysine isopeptide (Lys-Gly) (interchain with G-Cter in SUMO); alternate linkage. Lys-606 participates in a covalent cross-link: Glycyl lysine isopeptide (Lys-Gly) (interchain with G-Cter in SUMO). Ser-607 is modified (phosphoserine). A Glycyl lysine isopeptide (Lys-Gly) (interchain with G-Cter in SUMO) cross-link involves residue Lys-608. Ser-616 bears the Phosphoserine; by CDK1 and PINK1 mark. At Ser-637 the chain carries Phosphoserine; by CAMK1 and PKA. S-nitrosocysteine is present on Cys-644. The region spanning 644–735 (CEVIERLIKS…IIAEIRETHL (92 aa)) is the GED domain. The interval 654 to 668 (YFLIVRKNIQDSVPK) is important for homodimerization.

This sequence belongs to the TRAFAC class dynamin-like GTPase superfamily. Dynamin/Fzo/YdjA family. In terms of assembly, homotetramer; dimerizes through the N-terminal GTP-middle region of one molecule binding to the GED domain of another DNM1L molecule. Oligomerizes in a GTP-dependent manner to form membrane-associated tubules with a spiral pattern. Interacts with GSK3B and MARCHF5. Interacts (via the GTPase and B domains) with UBE2I; the interaction promotes sumoylation of DNM1L, mainly in its B domain. Interacts with PPP3CA; the interaction dephosphorylates DNM1L and regulates its transition to mitochondria. Interacts with BCL2L1 isoform BCL-X(L) and CLTA; DNM1L and BCL2L1 isoform BCL-X(L) may form a complex in synaptic vesicles that also contains clathrin and MFF. Interacts with MFF; the interaction is inhibited by C11orf65/MFI. Interacts with FIS1; may form part of a larger protein complex at the endoplasmic reticulum-mitochondrial interface during mitochondrial fission. Interacts with CANX. Interacts with BCAP31. Interacts with MIEF2 and MIEF1; GTP-dependent, regulates GTP hydrolysis and DNM1L oligomerization. Interacts with PGAM5; this interaction leads to dephosphorylation at Ser-656 and activation of GTPase activity and eventually to mitochondria fragmentation. Interacts with RALBP1; during mitosis, recruits DNM1L to the mitochondrion and mediates its activation by the mitotic kinase cyclin B-CDK1. Interacts with FUNDC1; this interaction recruits DNM1L/DRP1 at ER-mitochondria contact sites. Post-translationally, phosphorylation/dephosphorylation events on two sites near the GED domain regulate mitochondrial fission. Phosphorylation on Ser-637 by CAMK1 and PKA inhibits the GTPase activity, leading to a defect in mitochondrial fission promoting mitochondrial elongation. Dephosphorylated on this site by PPP3CA which promotes mitochondrial fission. Phosphorylation on Ser-616 by CDK1 and PINK1 activates the GTPase activity and promotes mitochondrial fission. Phosphorylated in a circadian manner at Ser-637. Dephosphorylated by PGAM5. In terms of processing, sumoylated on various lysine residues within the B domain, probably by MUL1. Sumoylation positively regulates mitochondrial fission. Desumoylated by SENP5 during G2/M transition of mitosis. Appears to be linked to its catalytic activity. S-nitrosylation increases DNM1L dimerization, mitochondrial fission and causes neuronal damage. Post-translationally, ubiquitination by MARCHF5 affects mitochondrial morphology. In terms of processing, O-GlcNAcylation augments the level of the GTP-bound active form of DNM1L and induces translocation from the cytoplasm to mitochondria in cardiomyocytes. It also decreases phosphorylation at Ser-637. Ubiquitously expressed with highest levels found in skeletal muscles, heart, kidney and brain. Isoform 1 is brain-specific. Isoform 2 and isoform 3 are predominantly expressed in testis and skeletal muscles respectively. Isoform 4 is weakly expressed in brain, heart and kidney. Isoform 5 is dominantly expressed in liver, heart and kidney. Isoform 6 is expressed in neurons.

It localises to the cytoplasm. The protein resides in the cytosol. Its subcellular location is the golgi apparatus. It is found in the endomembrane system. The protein localises to the mitochondrion outer membrane. It localises to the peroxisome. The protein resides in the membrane. Its subcellular location is the clathrin-coated pit. It is found in the cytoplasmic vesicle. The protein localises to the secretory vesicle. It localises to the synaptic vesicle membrane. The enzyme catalyses GTP + H2O = GDP + phosphate + H(+). With respect to regulation, GTPase activity is increased by binding to phospholipid membranes. In terms of biological role, functions in mitochondrial and peroxisomal division. Mediates membrane fission through oligomerization into membrane-associated tubular structures that wrap around the scission site to constrict and sever the mitochondrial membrane through a GTP hydrolysis-dependent mechanism. The specific recruitment at scission sites is mediated by membrane receptors like MFF, MIEF1 and MIEF2 for mitochondrial membranes. While the recruitment by the membrane receptors is GTP-dependent, the following hydrolysis of GTP induces the dissociation from the receptors and allows DNM1L filaments to curl into closed rings that are probably sufficient to sever a double membrane. Acts downstream of PINK1 to promote mitochondrial fission in a PRKN-dependent manner. Plays an important role in mitochondrial fission during mitosis. Through its function in mitochondrial division, ensures the survival of at least some types of postmitotic neurons, including Purkinje cells, by suppressing oxidative damage. Required for normal brain development, including that of cerebellum. Facilitates developmentally regulated apoptosis during neural tube formation. Required for a normal rate of cytochrome c release and caspase activation during apoptosis; this requirement may depend upon the cell type and the physiological apoptotic cues. Required for formation of endocytic vesicles. Proposed to regulate synaptic vesicle membrane dynamics through association with BCL2L1 isoform Bcl-X(L) which stimulates its GTPase activity in synaptic vesicles; the function may require its recruitment by MFF to clathrin-containing vesicles. Required for programmed necrosis execution. Rhythmic control of its activity following phosphorylation at Ser-637 is essential for the circadian control of mitochondrial ATP production. Inhibits peroxisomal division when overexpressed. This chain is Dynamin-1-like protein, found in Homo sapiens (Human).